The sequence spans 428 residues: Tyrosine--tRNA ligase (428 aa).

Residue tyrosine 37 coordinates L-tyrosine. The short motif at 42–51 (PTGSSLHAGH) is the 'HIGH' region element. L-tyrosine-binding residues include tyrosine 175 and glutamine 179. A 'KMSKS' region motif is present at residues 235–239 (KFGKS). Residue lysine 238 coordinates ATP. The S4 RNA-binding domain maps to 358–415 (ATILDLLVESGLEKSKGAARRTVGEGGAYVNNQRIEDIEWSPSAEELLHGSWLVLRKG).

It belongs to the class-I aminoacyl-tRNA synthetase family. TyrS type 1 subfamily. In terms of assembly, homodimer.

The protein localises to the cytoplasm. The catalysed reaction is tRNA(Tyr) + L-tyrosine + ATP = L-tyrosyl-tRNA(Tyr) + AMP + diphosphate + H(+). Functionally, catalyzes the attachment of tyrosine to tRNA(Tyr) in a two-step reaction: tyrosine is first activated by ATP to form Tyr-AMP and then transferred to the acceptor end of tRNA(Tyr). The chain is Tyrosine--tRNA ligase from Corynebacterium jeikeium (strain K411).